Here is a 493-residue protein sequence, read N- to C-terminus: Flagellin (493 aa).

This sequence belongs to the bacterial flagellin family.

Its subcellular location is the secreted. The protein resides in the bacterial flagellum. In terms of biological role, flagellin is the subunit protein which polymerizes to form the filaments of bacterial flagella. This Salmonella rubislaw protein is Flagellin (fliC).